The chain runs to 831 residues: Thymine dioxygenase JBP1-B (831 aa).

Positions 80-282 (VVGGVLLPGA…RLTCVCYYRA (203 aa)) are thymine dioxygenase. Residues histidine 207, aspartate 209, and histidine 257 each coordinate Fe cation. Residue arginine 273 coordinates 2-oxoglutarate. The DNA-binding JBP1 domain stretch occupies residues 409–578 (LGGALKAAEE…IEEARRRGNA (170 aa)).

Belongs to the TET family. JBP1 subfamily. Monomer. Binds to DNA as a monomer. Requires Fe(2+) as cofactor.

It localises to the nucleus. It catalyses the reaction thymine + 2-oxoglutarate + O2 = 5-hydroxymethyluracil + succinate + CO2. Dioxygenase that catalyzes the first step of DNA base J (beta-d-glucosyl-HOMedU) biosynthesis by converting thymine to 5-hydroxymethyluracil (HOMedU). DNA base J is a hypermodified thymidine residue found in the genome of kinetoplastid parasites, which is localized primarily to repetitive DNA, namely the telomeres, and is implicated in the regulation of antigenic variation. Also specifically binds to base J-containing DNA (J-DNA). Involved in propagation and maintenance of DNA base J synthesis initiated by JBP2 by specifically binding already synthesized DNA base J and propagating J synthesis. Thymine dioxygenase activity and J-DNA-binding are independent functions. This is Thymine dioxygenase JBP1-B (JBP1B) from Trypanosoma cruzi (strain CL Brener).